The primary structure comprises 234 residues: Hydrolase in agr operon (234 aa).

Positions 1–212 (ILYNKDTDVV…EKELTVTIDI (212 aa)) constitute a CN hydrolase domain. Catalysis depends on Glu-14, which acts as the Proton acceptor. Lys-83 acts as the Proton donor in catalysis. Cys-119 functions as the Nucleophile in the catalytic mechanism.

It belongs to the carbon-nitrogen hydrolase superfamily. NIT1/NIT2 family.

This chain is Hydrolase in agr operon, found in Staphylococcus lugdunensis.